The primary structure comprises 239 residues: Norbelladine 4'-O-methyltransferase 3 (239 aa).

Residues Val55, Glu77, 79 to 80 (GV), Ser85, Asp103, and Ala132 each bind S-adenosyl-L-methionine. Asp155 contributes to the a divalent metal cation binding site. Asp157 lines the S-adenosyl-L-methionine pocket. The a divalent metal cation site is built by Asp181 and Asn182.

It belongs to the class I-like SAM-binding methyltransferase superfamily. Cation-dependent O-methyltransferase family. Mg(2+) serves as cofactor.

It carries out the reaction norbelladine + S-adenosyl-L-methionine = 4'-O-methylnorbelladine + S-adenosyl-L-homocysteine + H(+). The protein operates within alkaloid biosynthesis. In terms of biological role, 4'-O-methyltransferase converting norbelladine to 4'-O-methylnorbelladine. 4'-O-methylnorbelladine is a precursor to all Amaryllidaceae alkaloids such as galanthamine, lycorine and haemanthamine, and including haemanthamine- and crinamine-type alkaloids, promising anticancer agents. The sequence is that of Norbelladine 4'-O-methyltransferase 3 from Narcissus aff. pseudonarcissus MK-2014 (Daffodil).